The sequence spans 204 residues: Pyrrolidone-carboxylate peptidase (204 aa).

Residues E80, C142, and H165 contribute to the active site.

This sequence belongs to the peptidase C15 family. In terms of assembly, homotetramer.

Its subcellular location is the cytoplasm. It catalyses the reaction Release of an N-terminal pyroglutamyl group from a polypeptide, the second amino acid generally not being Pro.. Removes 5-oxoproline from various penultimate amino acid residues except L-proline. The polypeptide is Pyrrolidone-carboxylate peptidase (Lysinibacillus sphaericus (strain C3-41)).